A 111-amino-acid chain; its full sequence is Flagellar hook-basal body complex protein FliE (111 aa).

Belongs to the FliE family.

The protein resides in the bacterial flagellum basal body. This Brucella abortus (strain S19) protein is Flagellar hook-basal body complex protein FliE.